A 195-amino-acid chain; its full sequence is Small ribosomal subunit protein uS4 (195 aa).

Residues 109–183 form the S4 RNA-binding domain; the sequence is RRLQTQVFKL…VKRKNLKKNQ (75 aa). A disordered region spans residues 165-195; it reads PFGGGRPGRVKRKNLKKNQGGGGGAAEEEED.

The protein belongs to the universal ribosomal protein uS4 family. Component of the small ribosomal subunit. Identified in a IGF2BP1-dependent mRNP granule complex containing untranslated mRNAs. Part of the small subunit (SSU) processome, composed of more than 70 proteins and the RNA chaperone small nucleolar RNA (snoRNA) U3.

It is found in the cytoplasm. The protein resides in the nucleus. The protein localises to the nucleolus. In terms of biological role, component of the small ribosomal subunit. The ribosome is a large ribonucleoprotein complex responsible for the synthesis of proteins in the cell. Part of the small subunit (SSU) processome, first precursor of the small eukaryotic ribosomal subunit. During the assembly of the SSU processome in the nucleolus, many ribosome biogenesis factors, an RNA chaperone and ribosomal proteins associate with the nascent pre-rRNA and work in concert to generate RNA folding, modifications, rearrangements and cleavage as well as targeted degradation of pre-ribosomal RNA by the RNA exosome. The chain is Small ribosomal subunit protein uS4 from Drosophila melanogaster (Fruit fly).